The chain runs to 227 residues: AN1-type zinc finger protein 3 (227 aa).

The A20-type zinc-finger motif lies at 12 to 44; that stretch reads PSLPPRCPCGFWGSSKTMNLCSKCFADFQKKQP. The Zn(2+) site is built by C18, C20, C32, and C35. Disordered stretches follow at residues 41 to 99 and 113 to 151; these read KKQP…TEEC and PTKRSCGADSQSENEASPVKRPRLVENPERPEESGRSKQ. Low complexity-rich tracts occupy residues 49-59 and 66-77; these read TPSTSNSQSDL and SDNNNTSVTTPT. Polar residues-rich tracts occupy residues 78–96 and 113–127; these read LSPSQQSLPTELNVTSPST and PTKRSCGADSQSENE. A compositionally biased stretch (basic and acidic residues) spans 135–148; it reads RLVENPERPEESGR. The segment at 151–200 adopts an AN1-type zinc-finger fold; it reads QKSRRRCFQCQTKLELVQQELGSCRCGYVFCMLHRLPEQHDCTFDHMGRG. 8 residues coordinate Zn(2+): C157, C160, C174, C176, C181, H184, H190, and C192.

Expressed in testis.

This is AN1-type zinc finger protein 3 (Zfand3) from Mus musculus (Mouse).